The chain runs to 397 residues: Elongation factor Tu (397 aa).

Residues 10–206 enclose the tr-type G domain; sequence KPHVNIGTIG…AVDDSIPEPQ (197 aa). A G1 region spans residues 19–26; it reads GHIDHGKT. 19–26 is a binding site for GTP; the sequence is GHIDHGKT. T26 is a Mg(2+) binding site. Residues 62 to 66 are G2; sequence GITIS. Residues 83 to 86 form a G3 region; that stretch reads DCPG. Residues 83 to 87 and 138 to 141 contribute to the GTP site; these read DCPGH and NKAD. Positions 138–141 are G4; the sequence is NKAD. Residues 176-178 form a G5 region; sequence SAL.

It belongs to the TRAFAC class translation factor GTPase superfamily. Classic translation factor GTPase family. EF-Tu/EF-1A subfamily. Monomer.

Its subcellular location is the cytoplasm. The catalysed reaction is GTP + H2O = GDP + phosphate + H(+). In terms of biological role, GTP hydrolase that promotes the GTP-dependent binding of aminoacyl-tRNA to the A-site of ribosomes during protein biosynthesis. This Frankia alni (strain DSM 45986 / CECT 9034 / ACN14a) protein is Elongation factor Tu.